Here is a 385-residue protein sequence, read N- to C-terminus: tRNA N6-adenosine threonylcarbamoyltransferase (385 aa).

A divalent metal cation contacts are provided by histidine 140, histidine 144, and tyrosine 161. Substrate-binding positions include 161–165 (YVSGG), aspartate 193, glycine 208, glutamate 212, and asparagine 314. Position 343 (aspartate 343) interacts with a divalent metal cation.

Belongs to the KAE1 / TsaD family. In terms of assembly, component of the EKC/KEOPS complex composed of at least BUD32, CGI121, GON7, KAE1 and PCC1; the whole complex dimerizes. The cofactor is a divalent metal cation.

The protein localises to the cytoplasm. The protein resides in the nucleus. It catalyses the reaction L-threonylcarbamoyladenylate + adenosine(37) in tRNA = N(6)-L-threonylcarbamoyladenosine(37) in tRNA + AMP + H(+). In terms of biological role, component of the EKC/KEOPS complex that is required for the formation of a threonylcarbamoyl group on adenosine at position 37 (t(6)A37) in tRNAs that read codons beginning with adenine. The complex is probably involved in the transfer of the threonylcarbamoyl moiety of threonylcarbamoyl-AMP (TC-AMP) to the N6 group of A37. KAE1 likely plays a direct catalytic role in this reaction, but requires other protein(s) of the complex to fulfill this activity. The EKC/KEOPS complex also promotes both telomere uncapping and telomere elongation. The complex is required for efficient recruitment of transcriptional coactivators. This Eremothecium gossypii (strain ATCC 10895 / CBS 109.51 / FGSC 9923 / NRRL Y-1056) (Yeast) protein is tRNA N6-adenosine threonylcarbamoyltransferase.